The following is an 883-amino-acid chain: Serine/threonine-protein phosphatase BSL1 homolog (883 aa).

Kelch repeat units lie at residues 64 to 113 (ASSG…AVGT), 221 to 271 (MLLL…VFVG), 273 to 323 (RLHV…DHDA), and 341 to 387 (QIYI…NRNH). 3 disordered regions span residues 381-402 (ENQN…STDK), 430-466 (SHAS…SLEP), and 499-525 (NESR…QRSP). The span at 385 to 399 (RNHNFNSDSPTTNNS) shows a compositional bias: polar residues. Mn(2+) contacts are provided by D586, H588, D620, and N652. The Proton donor role is filled by H653. Mn(2+) contacts are provided by H705 and H784. Residues 861-883 (QRPPTPTRGRPQSASDRNSLAYI) form a disordered region. A compositionally biased stretch (polar residues) spans 872–883 (QSASDRNSLAYI).

The protein belongs to the PPP phosphatase family. BSU subfamily. In terms of assembly, interacts with the phosphorylated form of BSK3. It depends on Mn(2+) as a cofactor.

It is found in the nucleus. It catalyses the reaction O-phospho-L-seryl-[protein] + H2O = L-seryl-[protein] + phosphate. The catalysed reaction is O-phospho-L-threonyl-[protein] + H2O = L-threonyl-[protein] + phosphate. The chain is Serine/threonine-protein phosphatase BSL1 homolog (BSL1) from Oryza sativa subsp. japonica (Rice).